A 495-amino-acid chain; its full sequence is Geraniol 8-hydroxylase (495 aa).

The helical transmembrane segment at Phe5 to Phe25 threads the bilayer. Cys438 lines the heme pocket.

This sequence belongs to the cytochrome P450 family. Heme serves as cofactor. As to expression, expressed in leaves, stems and roots.

Its subcellular location is the endoplasmic reticulum membrane. The enzyme catalyses (2E)-geraniol + reduced [NADPH--hemoprotein reductase] + O2 = (6E)-8-hydroxygeraniol + oxidized [NADPH--hemoprotein reductase] + H2O + H(+). Hydroxylase involved in the biosynthesis of hydroxygeraniol, a precursor of the iridoid monoterpenoid swertiamarin. In Swertia mussotii (Felwort), this protein is Geraniol 8-hydroxylase (CYP76B10).